Here is an 81-residue protein sequence, read N- to C-terminus: Large ribosomal subunit protein bL31B (81 aa).

The protein belongs to the bacterial ribosomal protein bL31 family. Type B subfamily. In terms of assembly, part of the 50S ribosomal subunit.

The protein is Large ribosomal subunit protein bL31B of Bacillus anthracis (strain A0248).